The primary structure comprises 360 residues: BOLA class I histocompatibility antigen, alpha chain BL3-6 (360 aa).

A signal peptide spans 1–21; sequence MGPRALLLLLSGVLILTETRA. The segment at 22-111 is alpha-1; that stretch reads GSHSLRYFST…LRGYYNQSEA (90 aa). Residues 22-308 lie on the Extracellular side of the membrane; the sequence is GSHSLRYFST…QPSFLTMGII (287 aa). N-linked (GlcNAc...) asparagine glycosylation is present at asparagine 107. The segment at 112–203 is alpha-2; sequence GSHTLQWMSG…ENGKDTLLRA (92 aa). 2 cysteine pairs are disulfide-bonded: cysteine 122–cysteine 185 and cysteine 224–cysteine 280. Residues 204-295 are alpha-3; sequence DPPKAHVTHH…GLQEPLTLRW (92 aa). An Ig-like C1-type domain is found at 206–292; it reads PKAHVTHHPI…QHEGLQEPLT (87 aa). The interval 296–308 is connecting peptide; that stretch reads EPPQPSFLTMGII. The chain crosses the membrane as a helical span at residues 309–328; the sequence is VGLVLLVVTGAVVAGVVICM. Topologically, residues 329–360 are cytoplasmic; it reads KKRSGEKGGNYIQASSSDSAQGSDVSLTVPKV. The segment at 340 to 360 is disordered; sequence IQASSSDSAQGSDVSLTVPKV. The segment covering 341 to 354 has biased composition (low complexity); the sequence is QASSSDSAQGSDVS. 2 positions are modified to phosphoserine: serine 351 and serine 354.

Belongs to the MHC class I family. Heterodimer of an alpha chain and a beta chain (beta-2-microglobulin).

Its subcellular location is the membrane. In terms of biological role, involved in the presentation of foreign antigens to the immune system. The polypeptide is BOLA class I histocompatibility antigen, alpha chain BL3-6 (Bos taurus (Bovine)).